Reading from the N-terminus, the 257-residue chain is RING-H2 finger protein ATL5 (257 aa).

Residues 28–48 traverse the membrane as a helical segment; that stretch reads IMLASVIILFVAVILILCFHS. An RING-type; atypical zinc finger spans residues 113 to 155; it reads CSVCLSEFEEDDEGRVLPKCGHVFHVDCIDTWFRSRSSCPLCR. The disordered stretch occupies residues 181-209; the sequence is EDTEAGSSSSSDESESSTPSSSSGSPVRF. Positions 185–206 are enriched in low complexity; sequence AGSSSSSDESESSTPSSSSGSP.

Belongs to the RING-type zinc finger family. ATL subfamily.

It is found in the membrane. The enzyme catalyses S-ubiquitinyl-[E2 ubiquitin-conjugating enzyme]-L-cysteine + [acceptor protein]-L-lysine = [E2 ubiquitin-conjugating enzyme]-L-cysteine + N(6)-ubiquitinyl-[acceptor protein]-L-lysine.. It participates in protein modification; protein ubiquitination. This is RING-H2 finger protein ATL5 (ATL5) from Arabidopsis thaliana (Mouse-ear cress).